The primary structure comprises 865 residues: Leucine--tRNA ligase (865 aa).

A 'HIGH' region motif is present at residues 41–51; the sequence is PYPSGRIHMGH. The 'KMSKS' region motif lies at 614 to 618; sequence KMSKS. Lysine 617 serves as a coordination point for ATP.

Belongs to the class-I aminoacyl-tRNA synthetase family.

It localises to the cytoplasm. It catalyses the reaction tRNA(Leu) + L-leucine + ATP = L-leucyl-tRNA(Leu) + AMP + diphosphate. This is Leucine--tRNA ligase from Rhodospirillum centenum (strain ATCC 51521 / SW).